Consider the following 1387-residue polypeptide: MSSLVSTPFTTATGVQKKLGAPVPLHSFLLSRRQPAAGAGRGRAAAAAIRCAVAGNGLFTQTKPEVRRVVPPEGDASRRGVPRVKVVYVVLEAQYQSSVTAAVRELNADPRRAAGFEVVGYLVEELRDEETYKTFCADLADANVFIGSLIFVEELALKVKDAVEKERDRMDAVLVFPSMPEVMRLNKLGSFSMSQLGQSKSPFFQLFKRKKNSGGFADSMLKLVRTLPKVLKYLPSDKAQDARLYILSLQFWLGGSPDNLQNFLKMIAVSYVPALKGADIKYDDPVLFLDAGIWHPLAPTMYDDVKEYLNWYGTRRDTNDKLKDPNAPVIGLVLQRSHIVTGDDGHYVAVIMELEAKGAKVIPIFAGGLDFSGPTQRYLVDPITGKPFVNAVVSLTGFALVGGPARQDHPKAIAALQKLDVPYIVALPLVFQTTEEWLNSTLGLHPIQVALQVALPELDGGMEPIVFAGRDPRTGKSHALHKRVEQLCTRAIRWAELKRKTKEEKKLAITVFSFPPDKGNVGTAAYLNVFNSIYSVLQDLKKDGYNVEGLPDTAEALIEEVIHDKEAQFNSPNLNVAYRMNVREYQSLTSYASLLEENWGKPPGNLNSDGENLLVYGKQYGNVFIGVQPTFGYEGDPMRLLFSKSASPHHGFAAYYTFVEKIFQADAVLHFGTHGSLEFMPGKQVGMSDACYPDSLIGNIPNIYYYAANNPSEATVAKRRSYANTISYLTPPAENAGLYKGLKQLSELISSYQSLKDTGRGPQIVSSIISTAKQCNLDKDVPLPEEGVELPPNERDLIVGKVYAKIMEIESRLLPCGLHVIGEPPSAIEAVATLVNIASLDRPEDEIYSLPNILAQTVGRNIEDVYRGSDKGILADVELLRQITEASRGAITTFVERTTNNKGQVVDVTNKLSTMLGFGLSEPWVQHLSKTKFIRADREKLRTLFTFLGECLKLIVADNELGSLKLALEGSYVEPGPGGDPIRNPKVLPTGKNIHALDPQAIPTTAALKSAKIIVDRLLERQKVDNGGKYPETIALVLWGTDNIKTYGESLAQVLWMIGVRPVADTFGRVNRVEPVSLEELGRPRIDVVINCSGVFRDLFINQMNLLDRAVKMVAELDEPEEMNYVRKHAQEQARELGVSLREAATRVFSNASGSYSSNVNLAVENASWTDEKQLQDMYLSRKSFAFDCDAPGAGMREQRKTFELALATADATFQNLDSSEISLTDVSHYFDSDPTKLVQGLRKDGRAPSSYIADTTTANAQVRTLSETVRLDARTKLLNPKWYEGMMKSGYEGVREIEKRLTNTVGWSATSGQVDNWVYEEANATFIEDEAMRKRLMDTNPNSFRKLVQTFLEASGRGYWETSEENLEKLRELYSEVEDKIEGIDR.

Residues 1–50 (MSSLVSTPFTTATGVQKKLGAPVPLHSFLLSRRQPAAGAGRGRAAAAAIR) constitute a chloroplast transit peptide.

It belongs to the Mg-chelatase subunit H family. As to quaternary structure, the magnesium chelatase complex is a heterotrimer consisting of subunits CHLI, CHLD and CHLH.

The protein resides in the plastid. It localises to the chloroplast stroma. Its subcellular location is the chloroplast membrane. The catalysed reaction is protoporphyrin IX + Mg(2+) + ATP + H2O = Mg-protoporphyrin IX + ADP + phosphate + 3 H(+). It functions in the pathway porphyrin-containing compound metabolism; chlorophyll biosynthesis. Its function is as follows. Involved in chlorophyll biosynthesis. Catalyzes the insertion of magnesium ion into protoporphyrin IX to yield Mg-protoporphyrin IX. The reaction takes place in two steps, with an ATP-dependent activation followed by an ATP-dependent chelation step. May be involved in the plastid-to-nucleus retrograde signaling. The protein is Magnesium-chelatase subunit ChlH, chloroplastic (CHLH) of Oryza sativa subsp. japonica (Rice).